Consider the following 293-residue polypeptide: Glutamine sensor pib2 (293 aa).

Residues 38–75 (APTRQATNGTGSVSGSPNSSSNSTPANQGSLPSHTNPQ) form a disordered region. Residues 44–62 (TNGTGSVSGSPNSSSNSTP) are compositionally biased toward low complexity. Residues 63–75 (ANQGSLPSHTNPQ) are compositionally biased toward polar residues. The segment at 156–220 (DVSVCSFPSC…SCVSCFYEYL (65 aa)) adopts an FYVE-type; degenerate zinc-finger fold. Zn(2+) contacts are provided by Cys-178, Cys-181, Cys-212, and Cys-215. A compositionally biased stretch (polar residues) spans 242–256 (APQQATTHPPSQPKN). The interval 242-276 (APQQATTHPPSQPKNAVSVPIPKMDSTDSKGELPS) is disordered. Ser-259 bears the Phosphoserine mark.

As to quaternary structure, interacts with the TORC1 complex when activated by glutamine or cysteine.

It is found in the vacuole membrane. With respect to regulation, activated by glutamine. In terms of biological role, functions as an intracellular glutamine sensor that directly activates the TORC1 signaling pathway, to promote cell growth when glutamine is available. The polypeptide is Glutamine sensor pib2 (Schizosaccharomyces pombe (strain 972 / ATCC 24843) (Fission yeast)).